Here is a 635-residue protein sequence, read N- to C-terminus: RING finger protein 207 (635 aa).

The RING-type zinc finger occupies 25-64 (CPLCHGQYERPCLLDCFHDFCTGCLRGRATDGRLSCPLCQ). The B box-type; atypical zinc-finger motif lies at 93–145 (SEAVRCANCDLECSQQDAETTYFCNTCGQPLCARCREETHRARMFARHDIVAL). The Zn(2+) site is built by Cys-98, Cys-101, Cys-127, and His-132. A coiled-coil region spans residues 422-460 (EHCRHYEDSYRGLQVEVQNLKDQVQELHRDLTKHHSLIK). The span at 553–562 (QVPVDEHAEH) shows a compositional bias: basic and acidic residues. The tract at residues 553 to 635 (QVPVDEHAEH…SGSKGACYQA (83 aa)) is disordered. The segment covering 589–598 (PNGSSWSLSS) has biased composition (polar residues). Over residues 607–622 (NQDHLRPKLEAGDEGW) the composition is skewed to basic and acidic residues.

As to quaternary structure, interacts with the core-glycosylated, but not the fully glycosylated form of KCNH2/HERG. Interacts with DNAJA1 and HSPA8. Interacts (via the C-terminus) with HSPA1A; this interaction additively increases KCNH2 expression.

Its subcellular location is the cytoplasm. Functionally, plays a role in cardiac repolarization possibly by stabilizing membrane expression of the potassium channel KCNH2/HERG, or by assisting its synthesis, folding or export from the endoplasmic reticulum, in a heat shock protein-dependent manner. This is RING finger protein 207 (Rnf207) from Mus musculus (Mouse).